We begin with the raw amino-acid sequence, 873 residues long: Actin-related protein 8 (873 aa).

Residues 108 to 129 (DEQVKPTSSTSSTSTTEEVEIK) form a disordered region. Over residues 114-123 (TSSTSSTSTT) the composition is skewed to low complexity. 368-371 (DLGH) serves as a coordination point for ATP. The segment covering 596-650 (NNNNNNNNSSSSSNNNNNNNNSGSNSNINSYNNNNNNNNNNNNNNNNNNNNSFNN) has biased composition (low complexity). The segment at 596 to 701 (NNNNNNNNSS…TSSPTKKLKI (106 aa)) is disordered. Residues 651–668 (VTIVTSTLNSNSTVPSTL) are compositionally biased toward polar residues. The segment covering 669-696 (NSNSTVPSISNSNSTVPSTSTSTTSSPT) has biased composition (low complexity). Residues 762–804 (FKQLEQQYQAQQLQFQQQLQQQQQQQQQLQQQLQNSTNSATTT) adopt a coiled-coil conformation.

It belongs to the actin family. ARP8 subfamily. In terms of assembly, component of the chromatin remodeling INO80 complex. Exists as monomers and dimers, but the dimer is most probably the biologically relevant form required for stable interactions with histones that exploits the twofold symmetry of the nucleosome core.

The protein localises to the nucleus. It localises to the cytoplasm. It is found in the cytoskeleton. Plays an important role in the functional organization of mitotic chromosomes. Exhibits low basal ATPase activity, and unable to polymerize. In terms of biological role, proposed core component of the chromatin remodeling INO80 complex which is involved in transcriptional regulation, DNA replication and probably DNA repair. Strongly prefer nucleosomes and H3-H4 tetramers over H2A-H2B dimers, suggesting it may act as a nucleosome recognition module within the complex. In Dictyostelium discoideum (Social amoeba), this protein is Actin-related protein 8.